The chain runs to 325 residues: LIM and senescent cell antigen-like-containing domain protein 1 (325 aa).

A2 carries the post-translational modification N-acetylalanine. 5 LIM zinc-binding domains span residues 10–62 (CERC…CEHD), 71–121 (CHQC…CRPC), 135–184 (CQKC…CLPC), 193–243 (CGAC…CETH), and 252–303 (CFHC…CKKC).

In terms of assembly, component of the heterotrimeric IPP (ILK-PINCH-PARVIN) complex composed of ILK, LIMS1/PINCH and PARVA; the complex binds to F-actin via the C-terminal tail of LIMS1 and the N-terminal region of PARVA, promoting F-actin filament bundling. Formation of the IPP complex is dependent on protein kinase C and precedes integrin-mediated cell adhesion and spreading. Competes with LIMS2 for interaction with ILK. Interacts (via LIM zinc-binding 5) with TGFB1I1. Interacts with SH3/SH2 adapter NCK2, thereby linking the complex to cell surface receptors. Expressed in most tissues except in the brain.

Its subcellular location is the cell junction. The protein resides in the focal adhesion. The protein localises to the cell membrane. Its function is as follows. Within the IPP (ILK-PINCH-PARVIN) complex, binds to F-actin, promoting F-actin bundling, a process required to generate force for actin cytoskeleton reorganization and subsequent dynamic cell adhesion events such as cell spreading and migration. The chain is LIM and senescent cell antigen-like-containing domain protein 1 (LIMS1) from Homo sapiens (Human).